Consider the following 236-residue polypeptide: E3 ubiquitin-protein ligase RNF187 (236 aa).

An RING-type zinc finger spans residues 12–53 (CALCQRAPREPVRADCGHRFCRACVVRFWAEEDGPFPCPECA). 2 positions are modified to asymmetric dimethylarginine; by PRMT1: R98 and R109. K195 participates in a covalent cross-link: Glycyl lysine isopeptide (Lys-Gly) (interchain with G-Cter in ubiquitin). Position 200 is a phosphoserine (S200). Glycyl lysine isopeptide (Lys-Gly) (interchain with G-Cter in ubiquitin) cross-links involve residues K224 and K225.

As to quaternary structure, homodimer. Interacts with JUN, independently of JUN phosphorylation. Interacts (via C-terminus) with TRIM7. Ubiquitinated; undergoes 'Lys-48'-linked autoubiquitination in the absence of growth factors and MAP3K1-induced 'Lys-63'-linked polyubiquitination. 'Lys-48'-autoubiquitination leads to degradation by the proteasome, while MAP3K1-induced 'Lys-63'-linked polyubiquitination results in the stabilization of the protein. 'Lys-48'- and 'Lys-63'-linked polyubiquitinations occur most probably on the same 3 C-terminal lysine residues (Lys-195, Lys-224 and Lys-225) and are thus mutually exclusive. Other sites of ubiquitination are not excluded. 'Lys-63'-linked polyubiquitination by TRIM7 in response to growth factor signaling via the MEK/ERK pathway enhances protein stability. Post-translationally, arginine methylation by PRMT1 stabilizes RNF187 by facilitating K63-linked ubiquitin chain formation, and enables dimerization, c-Jun interaction and subsequent AP1 target gene expression.

The protein resides in the cytoplasm. It is found in the nucleus. The enzyme catalyses S-ubiquitinyl-[E2 ubiquitin-conjugating enzyme]-L-cysteine + [acceptor protein]-L-lysine = [E2 ubiquitin-conjugating enzyme]-L-cysteine + N(6)-ubiquitinyl-[acceptor protein]-L-lysine.. The protein operates within protein modification; protein ubiquitination. Its function is as follows. E3 ubiquitin-protein ligase that acts as a coactivator of JUN-mediated gene activation in response to growth factor signaling via the MAP3K1 pathway, independently from MAPK8. The polypeptide is E3 ubiquitin-protein ligase RNF187 (Rnf187) (Mus musculus (Mouse)).